Consider the following 97-residue polypeptide: Early nodulin-75 (97 aa).

The tract at residues 1 to 97 is disordered; it reads RPHVHPPPEH…PEYQPPHEKP (97 aa). 2 stretches are compositionally biased toward pro residues: residues 9–22 and 31–43; these read EHQP…PEYQ and VHPP…PYQK. Residues 76–97 are compositionally biased toward basic and acidic residues; sequence PPHEKPPHEHPPPEYQPPHEKP.

It belongs to the nodulin 75 family.

In terms of biological role, involved in early stages of root nodule development. This chain is Early nodulin-75 (ENOD2), found in Medicago sativa (Alfalfa).